The sequence spans 247 residues: 5-oxoprolinase subunit A (247 aa).

The protein belongs to the LamB/PxpA family. Forms a complex composed of PxpA, PxpB and PxpC.

It catalyses the reaction 5-oxo-L-proline + ATP + 2 H2O = L-glutamate + ADP + phosphate + H(+). Functionally, catalyzes the cleavage of 5-oxoproline to form L-glutamate coupled to the hydrolysis of ATP to ADP and inorganic phosphate. The sequence is that of 5-oxoprolinase subunit A from Vibrio vulnificus (strain YJ016).